A 496-amino-acid chain; its full sequence is 3-octaprenyl-4-hydroxybenzoate carboxy-lyase (496 aa).

N181 is a Mn(2+) binding site. Residues 184–186 (IYR), 198–200 (RWL), and 203–204 (RG) each bind prenylated FMN. E247 provides a ligand contact to Mn(2+). Catalysis depends on D296, which acts as the Proton donor.

The protein belongs to the UbiD family. Homohexamer. Prenylated FMN serves as cofactor. Requires Mn(2+) as cofactor.

The protein localises to the cell membrane. The catalysed reaction is a 4-hydroxy-3-(all-trans-polyprenyl)benzoate + H(+) = a 2-(all-trans-polyprenyl)phenol + CO2. It functions in the pathway cofactor biosynthesis; ubiquinone biosynthesis. Its function is as follows. Catalyzes the decarboxylation of 3-octaprenyl-4-hydroxy benzoate to 2-octaprenylphenol, an intermediate step in ubiquinone biosynthesis. This Azoarcus sp. (strain BH72) protein is 3-octaprenyl-4-hydroxybenzoate carboxy-lyase.